Here is a 626-residue protein sequence, read N- to C-terminus: TVADKQARLMPLFKHLTALTREKLPLDQRDERLKGVGILPRGTLFSCFHARHLAEATELYVALYGAKDFNDFIHLCEQARQIVNEGMFVYAVSVAVLHREDCKGITVPPIQEVFPDRFVPAETINRANKEASNHPDQQSIVVEAEETGNILDPEYKLSYFREDIGINAHHWHWHIVYPATWNPTVMGKEKDRKGELFFYMHQQMCARYDSERLSNGLQRMIPFHNFDEPLEGYAPHLTSLVSGLQYASRPEGYSIHDLSDVDVQDMVRWRERILDAINMHYIVDKDNNKIPLDIEHGTDILGDIIESSDESKNVEYYGSLHNWGHVMMANITDPDHRFQENPGVMSDTSTSLRDPIFYRWHRFIDNIFQEHKKSFHPYTKEELSFPGVEVVGVSINSKTANVITTLIKESLLELSHGINFGTDQSVKVKYHHLDHEPFTYNIVVENNSGAEKHSTVRIFLAPKYDELNNKLEPDEQRRLFIELDKFFYTLTPGKNTIVRNHQDSSVTISKVRTFDQLGAGEGVSEDSTEYCSCGWPEHMLIPRGSHKGMEFELFVMLTDHDEDTVAGLSENAVCSDAVSYCGARDDRYPDKKAMGFPFDRKIEARTAAEFLTPNMGLTDIKIKFHG.

6 residues coordinate Cu cation: histidine 170, histidine 174, histidine 201, histidine 321, histidine 325, and histidine 361. At serine 374 the chain carries Phosphoserine.

The protein belongs to the tyrosinase family. Hemocyanin subfamily. In terms of assembly, scorpion hemocyanin is a 24-chain polymer with 8 different chains identified, assembled in hexameric substructures. Three disulfide bonds are present. In terms of tissue distribution, hemolymph.

It localises to the secreted. The protein resides in the extracellular space. Functionally, hemocyanins are copper-containing oxygen carriers occurring freely dissolved in the hemolymph of many mollusks and arthropods. This is Hemocyanin AA6 chain from Androctonus australis (Sahara scorpion).